The chain runs to 148 residues: 3-dehydroquinate dehydratase (148 aa).

The active-site Proton acceptor is the tyrosine 23. The substrate site is built by asparagine 75, histidine 81, and aspartate 88. Histidine 101 functions as the Proton donor in the catalytic mechanism. Substrate is bound by residues leucine 102–serine 103 and arginine 112.

This sequence belongs to the type-II 3-dehydroquinase family. As to quaternary structure, homododecamer.

It carries out the reaction 3-dehydroquinate = 3-dehydroshikimate + H2O. It participates in metabolic intermediate biosynthesis; chorismate biosynthesis; chorismate from D-erythrose 4-phosphate and phosphoenolpyruvate: step 3/7. Functionally, catalyzes a trans-dehydration via an enolate intermediate. In Cellvibrio japonicus (strain Ueda107) (Pseudomonas fluorescens subsp. cellulosa), this protein is 3-dehydroquinate dehydratase.